The chain runs to 277 residues: Large ribosomal subunit protein uL2 (277 aa).

2 disordered regions span residues 34–55 and 213–277; these read LQPLPKKAGRNNQGKLTVRHHG and WKGI…RKKK.

Belongs to the universal ribosomal protein uL2 family. Part of the 50S ribosomal subunit. Forms a bridge to the 30S subunit in the 70S ribosome.

Its function is as follows. One of the primary rRNA binding proteins. Required for association of the 30S and 50S subunits to form the 70S ribosome, for tRNA binding and peptide bond formation. It has been suggested to have peptidyltransferase activity; this is somewhat controversial. Makes several contacts with the 16S rRNA in the 70S ribosome. The sequence is that of Large ribosomal subunit protein uL2 from Staphylococcus haemolyticus (strain JCSC1435).